A 207-amino-acid chain; its full sequence is MDKQLRYAIALTGSIGSGKSTFVSLLSLYGYQSICADSIAHKVLEEHSAEVIAYFGNEILQSDNTINRKVLGNIIFASSSKREELQAILHPHIQKAILTQAQQLEEKKVWYFIDIPLFFEVGGKEAYPVARSLVIYTPKAKAIERIMKRNNFTFEEAKARIDAQMPIENKCRLADDIINNEGDLRTLQHNAETYIQSLPCVDCVQSS.

The DPCK domain maps to 8 to 207 (AIALTGSIGS…LPCVDCVQSS (200 aa)). ATP is bound at residue 16-21 (GSGKST).

The protein belongs to the CoaE family.

Its subcellular location is the cytoplasm. It catalyses the reaction 3'-dephospho-CoA + ATP = ADP + CoA + H(+). It participates in cofactor biosynthesis; coenzyme A biosynthesis; CoA from (R)-pantothenate: step 5/5. In terms of biological role, catalyzes the phosphorylation of the 3'-hydroxyl group of dephosphocoenzyme A to form coenzyme A. The protein is Dephospho-CoA kinase of Helicobacter hepaticus (strain ATCC 51449 / 3B1).